We begin with the raw amino-acid sequence, 539 residues long: MAAKMILFDEEARRALERGVNKLADTVKVTLGPKGRNVVLEKKFGSPQIVNDGVTIAKEIELEDPFENMGAQIVREVASKTNDIAGDGTTTATVLAQAMIREGLKNIAAGANPMILRRGIQKAVDVVVDEIKKMSKKVRGKEDITYVASISAGDEEIGKLVADAMEKVTNDGVITVEESKTTETTLEIVEGMQFDRGYISAYMVTDTERMEAVLDDPYILITDKKISTIQDILPLLEQIVQQGKKLLIIAEDVEGEALATLVVNKLRGTLQCVAVKAPGFGDRRKAMLQDIAILTGGQVISEELGLDLREVKISQLGRARQVKVQKENTIIVDGAGDPSEIKARIQSIKKQIEETTSDFDREKLQERLAKLAGGVAVIHVGAATETEMKEKKLRIEDALAATKAAVEEGIVPGGGTAFINAIPALDKLIETLTGDEKTGAMIVKKALEEPLRQIAENAGLDGSVIVNKVKESPAGIGFDALNERFVDMFEAGIVDPTKVTRTAIQNAASAAAMLLTTEAVVAEKPEKEKNPPAPAPDMY.

ATP is bound by residues 30 to 33, 87 to 91, glycine 414, 479 to 481, and aspartate 495; these read TLGP, DGTTT, and DAL.

The protein belongs to the chaperonin (HSP60) family. In terms of assembly, forms a cylinder of 14 subunits composed of two heptameric rings stacked back-to-back. Interacts with the co-chaperonin GroES.

It is found in the cytoplasm. It catalyses the reaction ATP + H2O + a folded polypeptide = ADP + phosphate + an unfolded polypeptide.. Functionally, together with its co-chaperonin GroES, plays an essential role in assisting protein folding. The GroEL-GroES system forms a nano-cage that allows encapsulation of the non-native substrate proteins and provides a physical environment optimized to promote and accelerate protein folding. The protein is Chaperonin GroEL of Caldicellulosiruptor saccharolyticus (strain ATCC 43494 / DSM 8903 / Tp8T 6331).